A 128-amino-acid polypeptide reads, in one-letter code: 3-aminoacrylate deaminase RutC (128 aa).

It belongs to the RutC family.

The enzyme catalyses (Z)-3-aminoacrylate + H2O + H(+) = 3-oxopropanoate + NH4(+). Involved in pyrimidine catabolism. Catalyzes the deamination of 3-aminoacrylate to malonic semialdehyde, a reaction that can also occur spontaneously. RutC may facilitate the reaction and modulate the metabolic fitness, rather than catalyzing essential functions. In Azorhizobium caulinodans (strain ATCC 43989 / DSM 5975 / JCM 20966 / LMG 6465 / NBRC 14845 / NCIMB 13405 / ORS 571), this protein is 3-aminoacrylate deaminase RutC.